A 253-amino-acid polypeptide reads, in one-letter code: uncharacterized protein (253 aa).

2 consecutive C2HC LYAR-type zinc fingers follow at residues 1–26 (MVFF…FQCR) and 27–51 (NTTF…VKCI). Residues Cys6, Cys9, His21, Cys25, Cys32, Cys35, His47, and Cys50 each coordinate Zn(2+). The stretch at 136–171 (AAEADKMREEAIRKQEETQKMEKAQKEAAAAAKKET) forms a coiled coil.

The protein localises to the nucleus. This is an uncharacterized protein from Caenorhabditis elegans.